Here is a 308-residue protein sequence, read N- to C-terminus: Homogentisate phytyltransferase (308 aa).

Transmembrane regions (helical) follow at residues 13-33, 44-64, 104-124, 142-162, 173-193, 219-241, 245-263, and 279-299; these read PHTI…TILG, LDLV…IVGL, LAIA…SLII, AALC…FLFF, ITPI…IAIF, VFRG…GLWA, LNTA…LLWW, and FYQF…LALW.

It belongs to the UbiA prenyltransferase family.

Its subcellular location is the membrane. The catalysed reaction is phytyl diphosphate + homogentisate + H(+) = 2-methyl-6-phytyl-1,4-benzene-1,4-diol + CO2 + diphosphate. It participates in cofactor biosynthesis; tocopherol biosynthesis. Functionally, involved in the synthesis of tocopherol (vitamin E). Catalyzes the condensation of homogentisate and phytyl diphosphate to form dimethylphytylhydrquinone. This Synechocystis sp. (strain ATCC 27184 / PCC 6803 / Kazusa) protein is Homogentisate phytyltransferase.